A 453-amino-acid polypeptide reads, in one-letter code: Na(+)/H(+) antiporter NhaA (453 aa).

Helical transmembrane passes span Phe-27 to Met-47, Leu-78 to Ile-98, Ile-114 to Phe-134, Gly-143 to Gly-163, Ile-172 to Phe-192, Gly-201 to Ala-221, Ser-222 to Ile-242, Val-249 to Ile-269, Pro-316 to Ala-336, Phe-346 to Thr-366, Trp-385 to Val-405, and Ile-421 to Tyr-441.

The protein belongs to the NhaA Na(+)/H(+) (TC 2.A.33) antiporter family.

The protein localises to the cell inner membrane. It catalyses the reaction Na(+)(in) + 2 H(+)(out) = Na(+)(out) + 2 H(+)(in). Functionally, na(+)/H(+) antiporter that extrudes sodium in exchange for external protons. The sequence is that of Na(+)/H(+) antiporter NhaA from Bartonella henselae (strain ATCC 49882 / DSM 28221 / CCUG 30454 / Houston 1) (Rochalimaea henselae).